The following is a 523-amino-acid chain: Lysine-specific demethylase 4D (523 aa).

The JmjN domain maps to 18 to 60 (IMIFHPTKEEFNDFDKYIAYMESQGAHRAGLAKIIPPKEWKAR). PolyADP-ribosyl glutamic acid occurs at positions 26 and 27. 2-oxoglutarate is bound at residue Tyr136. One can recognise a JmjC domain in the interval 146 to 312 (DENTKQWNLG…YGKMASQCSC (167 aa)). His192 and Glu194 together coordinate Fe cation. Residues Asn202 and Lys210 each coordinate 2-oxoglutarate. Cys238 and His244 together coordinate Zn(2+). Lys245 serves as a coordination point for 2-oxoglutarate. A Fe cation-binding site is contributed by His280. Residues Cys310 and Cys312 each coordinate Zn(2+). The tract at residues 407–523 (RRSAVSGTAT…ASGCSWAPVP (117 aa)) is disordered. Positions 428-440 (KPSSTPSSTPGPS) are enriched in low complexity. Residues 448 to 458 (NGRRGRGRPPQ) show a composition bias toward basic residues.

This sequence belongs to the JHDM3 histone demethylase family. Fe(2+) is required as a cofactor. In terms of processing, ubiquitinated via 'Lys-63'-linked ubiquitin chains. Deubiquitinated by USP14 with the help of TRIM14 leading to stabilization.

It localises to the nucleus. It carries out the reaction N(6),N(6),N(6)-trimethyl-L-lysyl(9)-[histone H3] + 2 2-oxoglutarate + 2 O2 = N(6)-methyl-L-lysyl(9)-[histone H3] + 2 formaldehyde + 2 succinate + 2 CO2. Histone demethylase that specifically demethylates 'Lys-9' of histone H3, thereby playing a central role in histone code. Does not demethylate histone H3 'Lys-4', H3 'Lys-27', H3 'Lys-36' nor H4 'Lys-20'. Demethylates both di- and trimethylated H3 'Lys-9' residue, while it has no activity on monomethylated residues. Demethylation of Lys residue generates formaldehyde and succinate. The chain is Lysine-specific demethylase 4D (KDM4D) from Homo sapiens (Human).